Here is a 143-residue protein sequence, read N- to C-terminus: D-aminoacyl-tRNA deacylase (143 aa).

A Gly-cisPro motif, important for rejection of L-amino acids motif is present at residues 135–136 (GP).

Belongs to the DTD family. In terms of assembly, homodimer.

The protein resides in the cytoplasm. It catalyses the reaction glycyl-tRNA(Ala) + H2O = tRNA(Ala) + glycine + H(+). The catalysed reaction is a D-aminoacyl-tRNA + H2O = a tRNA + a D-alpha-amino acid + H(+). In terms of biological role, an aminoacyl-tRNA editing enzyme that deacylates mischarged D-aminoacyl-tRNAs. Also deacylates mischarged glycyl-tRNA(Ala), protecting cells against glycine mischarging by AlaRS. Acts via tRNA-based rather than protein-based catalysis; rejects L-amino acids rather than detecting D-amino acids in the active site. By recycling D-aminoacyl-tRNA to D-amino acids and free tRNA molecules, this enzyme counteracts the toxicity associated with the formation of D-aminoacyl-tRNA entities in vivo and helps enforce protein L-homochirality. The sequence is that of D-aminoacyl-tRNA deacylase from Mycobacterium avium (strain 104).